The chain runs to 78 residues: Acyl carrier protein AcpP (78 aa).

A Carrier domain is found at 2 to 77 (SDIAERVKKI…DAVKFIEKAQ (76 aa)). An O-(pantetheine 4'-phosphoryl)serine modification is found at Ser-37.

This sequence belongs to the acyl carrier protein (ACP) family. In terms of processing, 4'-phosphopantetheine is transferred from CoA to a specific serine of apo-ACP by AcpS. This modification is essential for activity because fatty acids are bound in thioester linkage to the sulfhydryl of the prosthetic group.

It localises to the cytoplasm. The protein operates within lipid metabolism; fatty acid biosynthesis. Functionally, carrier of the growing fatty acid chain in fatty acid biosynthesis. This is Acyl carrier protein AcpP from Agrobacterium fabrum (strain C58 / ATCC 33970) (Agrobacterium tumefaciens (strain C58)).